Consider the following 186-residue polypeptide: Adenine phosphoribosyltransferase (186 aa).

It belongs to the purine/pyrimidine phosphoribosyltransferase family. In terms of assembly, homodimer.

The protein resides in the cytoplasm. It carries out the reaction AMP + diphosphate = 5-phospho-alpha-D-ribose 1-diphosphate + adenine. Its pathway is purine metabolism; AMP biosynthesis via salvage pathway; AMP from adenine: step 1/1. Functionally, catalyzes a salvage reaction resulting in the formation of AMP, that is energically less costly than de novo synthesis. The sequence is that of Adenine phosphoribosyltransferase from Xanthomonas oryzae pv. oryzae (strain PXO99A).